Consider the following 344-residue polypeptide: Molybdate/tungstate import ATP-binding protein WtpC (344 aa).

One can recognise an ABC transporter domain in the interval leucine 2–leucine 231. Glycine 33 to threonine 40 contributes to the ATP binding site. The 65-residue stretch at lysine 280–phenylalanine 344 folds into the Mop domain.

It belongs to the ABC transporter superfamily. Sulfate/tungstate importer (TC 3.A.1.6) family. In terms of assembly, the complex is composed of two ATP-binding proteins (WtpC), two transmembrane proteins (WtpB) and a solute-binding protein (WtpA).

Its subcellular location is the cell membrane. It catalyses the reaction tungstate(in) + ATP + H2O = tungstate(out) + ADP + phosphate + H(+). Functionally, part of the ABC transporter complex WtpABC involved in molybdate/tungstate import. Responsible for energy coupling to the transport system. This chain is Molybdate/tungstate import ATP-binding protein WtpC (wtpC), found in Pyrococcus abyssi (strain GE5 / Orsay).